The sequence spans 713 residues: UvrABC system protein B (713 aa).

The 387-residue stretch at 35 to 421 folds into the Helicase ATP-binding domain; it reads RRIRAGEKDV…GDGFVEQIIR (387 aa). 48-55 contributes to the ATP binding site; sequence GATGTGKS. The Beta-hairpin motif lies at 101 to 124; sequence YYDYYQPEAYVPQSDTYIEKDSSI. Residues 438–604 enclose the Helicase C-terminal domain; it reads QIDDLVHEIR…PLRKKINDIV (167 aa). The disordered stretch occupies residues 624–663; sequence QAKDGKGAKAPVPSLGGKAAAKGAKSAKGKAKETVPTDRP. Residues 639–649 are compositionally biased toward low complexity; sequence GGKAAAKGAKS. Basic and acidic residues predominate over residues 653–663; the sequence is KAKETVPTDRP. Residues 668 to 703 form the UVR domain; it reads AEEIEELTNRMRAAAADLQFEIAARLRDEVSEMKKE.

This sequence belongs to the UvrB family. In terms of assembly, forms a heterotetramer with UvrA during the search for lesions. Interacts with UvrC in an incision complex.

The protein resides in the cytoplasm. In terms of biological role, the UvrABC repair system catalyzes the recognition and processing of DNA lesions. A damage recognition complex composed of 2 UvrA and 2 UvrB subunits scans DNA for abnormalities. Upon binding of the UvrA(2)B(2) complex to a putative damaged site, the DNA wraps around one UvrB monomer. DNA wrap is dependent on ATP binding by UvrB and probably causes local melting of the DNA helix, facilitating insertion of UvrB beta-hairpin between the DNA strands. Then UvrB probes one DNA strand for the presence of a lesion. If a lesion is found the UvrA subunits dissociate and the UvrB-DNA preincision complex is formed. This complex is subsequently bound by UvrC and the second UvrB is released. If no lesion is found, the DNA wraps around the other UvrB subunit that will check the other stand for damage. The sequence is that of UvrABC system protein B from Streptomyces avermitilis (strain ATCC 31267 / DSM 46492 / JCM 5070 / NBRC 14893 / NCIMB 12804 / NRRL 8165 / MA-4680).